A 150-amino-acid polypeptide reads, in one-letter code: Catabolic 3-dehydroquinase 2 (150 aa).

Catalysis depends on Tyr-23, which acts as the Proton acceptor. Substrate contacts are provided by Asn-74, His-80, and Asp-87. The active-site Proton donor is the His-100. Substrate-binding positions include 101–102 (IT) and Arg-111.

The protein belongs to the type-II 3-dehydroquinase family. Homododecamer. Adopts a ring-like structure, composed of an arrangement of two hexameric rings stacked on top of one another.

It catalyses the reaction 3-dehydroquinate = 3-dehydroshikimate + H2O. Its pathway is aromatic compound metabolism; 3,4-dihydroxybenzoate biosynthesis; 3,4-dihydroxybenzoate from 3-dehydroquinate: step 1/2. Functionally, is involved in the catabolism of quinate. Allows the utilization of quinate as carbon source via the beta-ketoadipate pathway. The chain is Catabolic 3-dehydroquinase 2 from Aspergillus flavus (strain ATCC 200026 / FGSC A1120 / IAM 13836 / NRRL 3357 / JCM 12722 / SRRC 167).